The following is a 263-amino-acid chain: Acyl-[acyl-carrier-protein]--UDP-N-acetylglucosamine O-acyltransferase (263 aa).

It belongs to the transferase hexapeptide repeat family. LpxA subfamily. In terms of assembly, homotrimer.

The protein resides in the cytoplasm. It catalyses the reaction a (3R)-hydroxyacyl-[ACP] + UDP-N-acetyl-alpha-D-glucosamine = a UDP-3-O-[(3R)-3-hydroxyacyl]-N-acetyl-alpha-D-glucosamine + holo-[ACP]. The protein operates within glycolipid biosynthesis; lipid IV(A) biosynthesis; lipid IV(A) from (3R)-3-hydroxytetradecanoyl-[acyl-carrier-protein] and UDP-N-acetyl-alpha-D-glucosamine: step 1/6. Involved in the biosynthesis of lipid A, a phosphorylated glycolipid that anchors the lipopolysaccharide to the outer membrane of the cell. This chain is Acyl-[acyl-carrier-protein]--UDP-N-acetylglucosamine O-acyltransferase, found in Tolumonas auensis (strain DSM 9187 / NBRC 110442 / TA 4).